Here is a 107-residue protein sequence, read N- to C-terminus: Large ribosomal subunit protein P2-A (107 aa).

Residues 85–107 (GAAAPAAAAEEEEDDDMGFGLFD) form a disordered region.

The protein belongs to the eukaryotic ribosomal protein P1/P2 family. In terms of assembly, P1 and P2 exist as dimers at the large ribosomal subunit. Phosphorylated.

Its function is as follows. Plays an important role in the elongation step of protein synthesis. This Trypanosoma cruzi protein is Large ribosomal subunit protein P2-A.